A 700-amino-acid polypeptide reads, in one-letter code: Long chain acyl-CoA synthetase 7, peroxisomal (700 aa).

The disordered stretch occupies residues 1-29 (MEFASPEQRRLETIRSHIDTSPTNDQSSS). A compositionally biased stretch (basic and acidic residues) spans 7 to 18 (EQRRLETIRSHI). A Microbody targeting signal motif is present at residues 10-18 (RLETIRSHI). Over residues 19–29 (DTSPTNDQSSS) the composition is skewed to polar residues. 266–277 (ICYTSGTTGTPK) is a binding site for ATP. The interval 526–550 (DGWLHTGDIGLWLPGGRLKIIDRKK) is fatty acid-binding. Residues 698 to 700 (SKL) carry the Microbody targeting signal motif.

This sequence belongs to the ATP-dependent AMP-binding enzyme family. As to quaternary structure, interacts with PEX5. It depends on Mg(2+) as a cofactor. Expressed in roots, stems, leaves flowers and germinating seedling. Preferentially expressed in seeds.

It localises to the peroxisome. It carries out the reaction a long-chain fatty acid + ATP + CoA = a long-chain fatty acyl-CoA + AMP + diphosphate. It catalyses the reaction decanoate + ATP + CoA = decanoyl-CoA + AMP + diphosphate. The catalysed reaction is dodecanoate + ATP + CoA = dodecanoyl-CoA + AMP + diphosphate. The enzyme catalyses tetradecanoate + ATP + CoA = tetradecanoyl-CoA + AMP + diphosphate. It carries out the reaction hexadecanoate + ATP + CoA = hexadecanoyl-CoA + AMP + diphosphate. It catalyses the reaction (9Z)-octadecenoate + ATP + CoA = (9Z)-octadecenoyl-CoA + AMP + diphosphate. The catalysed reaction is (9Z,12Z)-octadecadienoate + ATP + CoA = (9Z,12Z)-octadecadienoyl-CoA + AMP + diphosphate. The enzyme catalyses (9Z,12Z,15Z)-octadecatrienoate + ATP + CoA = (9Z,12Z,15Z)-octadecatrienoyl-CoA + AMP + diphosphate. The protein operates within lipid metabolism; fatty acid metabolism. In terms of biological role, activation of long-chain fatty acids for both synthesis of cellular lipids, and degradation via beta-oxidation. Preferentially uses palmitate, palmitoleate, oleate, linoleate and eicosenoate as substrates. Can use myristate and linolenate as substrates. Functions redundantly with LACS6 in lipid mobilization for beta-oxidation during seed germination, which is essential for postgerminative growth and seedling establishment. The sequence is that of Long chain acyl-CoA synthetase 7, peroxisomal from Arabidopsis thaliana (Mouse-ear cress).